Consider the following 142-residue polypeptide: Translation initiation factor 2 subunit beta (142 aa).

This sequence belongs to the eIF-2-beta/eIF-5 family. Heterotrimer composed of an alpha, a beta and a gamma chain.

Functionally, eIF-2 functions in the early steps of protein synthesis by forming a ternary complex with GTP and initiator tRNA. This Staphylothermus marinus (strain ATCC 43588 / DSM 3639 / JCM 9404 / F1) protein is Translation initiation factor 2 subunit beta.